Here is a 350-residue protein sequence, read N- to C-terminus: Aminomethyltransferase (350 aa).

Belongs to the GcvT family. In terms of assembly, the glycine cleavage system is composed of four proteins: P, T, L and H.

The enzyme catalyses N(6)-[(R)-S(8)-aminomethyldihydrolipoyl]-L-lysyl-[protein] + (6S)-5,6,7,8-tetrahydrofolate = N(6)-[(R)-dihydrolipoyl]-L-lysyl-[protein] + (6R)-5,10-methylene-5,6,7,8-tetrahydrofolate + NH4(+). In terms of biological role, the glycine cleavage system catalyzes the degradation of glycine. The protein is Aminomethyltransferase of Aquifex aeolicus (strain VF5).